The chain runs to 94 residues: Neutrophil defensin 6 (94 aa).

The signal sequence occupies residues 1–19 (MRTIAILAAILLFALLAQA). Positions 20–61 (KSLQETADEAATQEQPGEDDQDLAVSFEENGLSTLRASGSQA) are excised as a propeptide. 3 cysteine pairs are disulfide-bonded: Cys65-Cys93, Cys67-Cys82, and Cys72-Cys92.

This sequence belongs to the alpha-defensin family.

Its subcellular location is the secreted. Its function is as follows. Defensins 6 and 7 have bacteriostatic activity against Gram-positive bacteria S.aureus and L.monocytogenes and Gram-negative bacterium E.coli and antifungal activity against C.neoformans. Defensin 7 has microbicidial activity against Gram-positive bacteria S.aureus and L.monocytogenes. In Macaca mulatta (Rhesus macaque), this protein is Neutrophil defensin 6.